The primary structure comprises 387 residues: MTNCTDEDLDNYLLNQVDLRHRQVSKCVEDVQKIIKDLTTEVSSKDARFQSIANAGVHNASLKDQPALMSKWSALLRGRCAYNPAIQVLSPTLYLISVPLQGLMGYKERRTRQWRYYTLTGSRLLSPVREPEKLHQWLELESFVNPSQEWHDARMTIEGDIVPAKVVNVFKDLLETSIKTRGLTNKVSVLESVGTAVRVAVETSEAQIEVKLVPTVELMNYWPKRARWPRLFRRWPSTERARCIKSFGFNLMASSNYHWLLSFSRAEQVLLSNIDEDGGCRRKCYRVVRQLKEDGWCPGSKPVITAFHLQTLLFWTCEKYPCTRDWKDFRGCVLRLVQKLHKCVSQHYLRHYFIRSHNLLKYSNTNELDEVAKKINHFLENPGTYIH.

This sequence belongs to the mab-21 family.

In Danio rerio (Zebrafish), this protein is Protein mab-21-like 3 (mab21L3).